We begin with the raw amino-acid sequence, 197 residues long: Probable molybdenum cofactor guanylyltransferase (197 aa).

GTP is bound by residues 10-12 (LCG), K22, D73, and D102. Position 102 (D102) interacts with Mg(2+).

This sequence belongs to the MobA family. The cofactor is Mg(2+).

Its subcellular location is the cytoplasm. It catalyses the reaction Mo-molybdopterin + GTP + H(+) = Mo-molybdopterin guanine dinucleotide + diphosphate. Transfers a GMP moiety from GTP to Mo-molybdopterin (Mo-MPT) cofactor (Moco or molybdenum cofactor) to form Mo-molybdopterin guanine dinucleotide (Mo-MGD) cofactor. In Methanothermobacter thermautotrophicus (strain ATCC 29096 / DSM 1053 / JCM 10044 / NBRC 100330 / Delta H) (Methanobacterium thermoautotrophicum), this protein is Probable molybdenum cofactor guanylyltransferase.